The chain runs to 486 residues: UDP-N-acetylmuramate--L-alanine ligase (486 aa).

123 to 129 (GTHGKTT) contacts ATP.

It belongs to the MurCDEF family.

It is found in the cytoplasm. It carries out the reaction UDP-N-acetyl-alpha-D-muramate + L-alanine + ATP = UDP-N-acetyl-alpha-D-muramoyl-L-alanine + ADP + phosphate + H(+). It functions in the pathway cell wall biogenesis; peptidoglycan biosynthesis. Cell wall formation. The sequence is that of UDP-N-acetylmuramate--L-alanine ligase from Pseudomonas fluorescens (strain Pf0-1).